Reading from the N-terminus, the 815-residue chain is (-)-kolavenyl diphosphate synthase TPS28, chloroplastic (815 aa).

Residues 1–51 (MFMSSSSSSHARRPQLSSFSYLHPPLPFPGLSFFNTRDKRVNFDSTRIICI) constitute a chloroplast transit peptide. Residue K247 coordinates substrate. Mg(2+)-binding residues include D379 and D381. The DXDD motif signature appears at 379-382 (DIDD). K465 is a binding site for substrate.

It belongs to the terpene synthase family. Tpsc subfamily. Requires Mg(2+) as cofactor.

It is found in the plastid. Its subcellular location is the chloroplast. The catalysed reaction is (2E,6E,10E)-geranylgeranyl diphosphate = (-)-kolavenyl diphosphate. Its activity is regulated as follows. Inhibited by high concentrations of magnesium. Functionally, diterpene synthase that catalyzes the formation of (-)-kolavenyl diphosphate from geranylgeranyl diphosphate (GGPP). This Tripterygium wilfordii (Thunder God vine) protein is (-)-kolavenyl diphosphate synthase TPS28, chloroplastic.